Here is a 375-residue protein sequence, read N- to C-terminus: Filamin-binding LIM protein 1 (375 aa).

Residues 1 to 70 are filamin-binding; that stretch reads MASKPEKRVA…SPWTPPGRAA (70 aa). Disordered regions lie at residues 43-119 and 137-176; these read WEAP…PSEE and HLSP…AERV. Composition is skewed to pro residues over residues 104-114 and 140-149; these read FPPPPPPPPVL and PPLPPPPPQA. The segment covering 150–159 has biased composition (low complexity); it reads PAERPSVQPS. LIM zinc-binding domains follow at residues 183–244, 245–302, and 303–372; these read DICA…TLER, CGKC…RKFA, and PVCS…RSAA. Positions 278–375 are FERMT2-binding; that stretch reads IGDESFALGS…HVKRSAAGCC (98 aa).

Interacts with FERMT2, FLNA, FLNB and FLNC. Interacts with NKX2-5.

The protein resides in the cell junction. Its subcellular location is the focal adhesion. It localises to the cytoplasm. It is found in the cytoskeleton. The protein localises to the stress fiber. Functionally, serves as an anchoring site for cell-ECM adhesion proteins and filamin-containing actin filaments. Is implicated in cell shape modulation (spreading) and motility. May participate in the regulation of filamin-mediated cross-linking and stabilization of actin filaments. May also regulate the assembly of filamin-containing signaling complexes that control actin assembly. Promotes dissociation of FLNA from ITGB3 and ITGB7. Promotes activation of integrins and regulates integrin-mediated cell-cell adhesion. The polypeptide is Filamin-binding LIM protein 1 (FBLIM1) (Pongo abelii (Sumatran orangutan)).